Consider the following 330-residue polypeptide: GMP reductase (330 aa).

C180 (thioimidate intermediate) is an active-site residue. 209–232 lines the NADP(+) pocket; the sequence is LIADGGIRHNGDIAKSVRFGASMV.

Belongs to the IMPDH/GMPR family. GuaC type 2 subfamily.

The catalysed reaction is IMP + NH4(+) + NADP(+) = GMP + NADPH + 2 H(+). Functionally, catalyzes the irreversible NADPH-dependent deamination of GMP to IMP. It functions in the conversion of nucleobase, nucleoside and nucleotide derivatives of G to A nucleotides, and in maintaining the intracellular balance of A and G nucleotides. This is GMP reductase from Lactobacillus acidophilus (strain ATCC 700396 / NCK56 / N2 / NCFM).